The primary structure comprises 178 residues: Large ribosomal subunit protein uL5 (178 aa).

It belongs to the universal ribosomal protein uL5 family. Part of the 50S ribosomal subunit; contacts the 5S rRNA and probably tRNA. Forms a bridge to the 30S subunit in the 70S ribosome.

In terms of biological role, this is one of the proteins that bind and probably mediate the attachment of the 5S RNA into the large ribosomal subunit, where it forms part of the central protuberance. In the 70S ribosome it contacts protein S13 of the 30S subunit (bridge B1b), connecting the 2 subunits; this bridge is implicated in subunit movement. May contact the P site tRNA; the 5S rRNA and some of its associated proteins might help stabilize positioning of ribosome-bound tRNAs. The chain is Large ribosomal subunit protein uL5 from Archaeoglobus fulgidus (strain ATCC 49558 / DSM 4304 / JCM 9628 / NBRC 100126 / VC-16).